A 2114-amino-acid polypeptide reads, in one-letter code: Protein CELLULOSE SYNTHASE INTERACTIVE 2 (2114 aa).

42 ARM repeats span residues 2–42 (TSEM…LLGL), 46–87 (KKEC…VLCK), 89–128 (KNVR…EVSL), 135–177 (NVGT…NLCG), 180–219 (DGFW…RLIR), 222–262 (TSSI…AITS), 265–305 (EEAI…SYGT), 354–394 (GDTR…SLFG), 396–435 (VDLS…NLCK), 479–519 (EESR…NLCC), 522–561 (EEIR…KLIK), 563–595 (ADPS…HVLA), 601–640 (EFVT…DLFS), 643–682 (KDLC…SLSN), 708–750 (AKTN…RVLR), 774–816 (SDVF…LLAK), 825–865 (HNPF…RFCK), 870–910 (LLGR…CAAK), 914–953 (TLWA…IQRP), 994–1033 (PSNR…KWIA), 1044–1083 (PKVV…ALVR), 1087–1128 (DKTI…LVQN), 1141–1182 (ERVR…RIAD), 1185–1225 (DLSK…SLFR), 1227–1264 (PEIT…LCEL), 1265–1304 (FSSE…ALVK), 1312–1353 (RPDI…FLFT), 1355–1394 (EGLR…RLLD), 1396–1435 (KRFV…KMAK), 1454–1494 (ISQL…MVQP), 1496–1525 (LLIL…KPMV), 1526–1564 (LESL…SLLE), 1566–1605 (QRFQ…RSSV), 1606–1648 (TWPK…NILR), 1650–1689 (NPEH…ENQD), 1690–1730 (SSSV…RNPK), 1732–1771 (RETK…DISQ), 1772–1813 (HEGL…NFAM), 1816–1855 (RTSR…SLFS), 1857–1898 (HTLQ…TILT), 1901–1940 (PKLR…TLRQ), and 1949–1993 (TARS…CLPG). Positions 1974 to 2087 (SPAPSSFHER…LSEGSYSGIF (114 aa)) constitute a C2 domain.

In terms of assembly, associates with cellulase synthase (CESA) complexes. Binds to cortical microtubules.

Its subcellular location is the cell membrane. It is found in the cytoplasm. The protein resides in the cytoskeleton. In terms of biological role, regulator of the microtubular cytoskeleton. Microtubule-associated protein involved in the association of cellulase synthase (CESA) complexes (CSCs) and cortical microtubules. Promotes dynamics of CSCs in the plasma membrane. Regulates primary cell wall biosynthesis and cellulose microfibrils organization. This is Protein CELLULOSE SYNTHASE INTERACTIVE 2 from Arabidopsis thaliana (Mouse-ear cress).